The chain runs to 601 residues: Alpha-terpineol synthase, chloroplastic (601 aa).

A chloroplast-targeting transit peptide spans 1–47; it reads MSTISIHHVGILRNPLHSKSKRASINKPWSLSLPRSSSASRLVEPCR. Residues D357 and D361 each contribute to the Mn(2+) site. The short motif at 357–361 is the DDXXD motif element; the sequence is DDVYD. 2 homodimerization regions span residues 363 to 369 and 435 to 471; these read YGTLDEL and EAEWYKSGYTPSLEEYLTIAKISIASLTILLSVELSL. D499 and E507 together coordinate Mn(2+).

This sequence belongs to the terpene synthase family. In terms of assembly, homodimer. The cofactor is Mn(2+). Requires Mg(2+) as cofactor.

It localises to the plastid. Its subcellular location is the chloroplast. The catalysed reaction is (2E)-geranyl diphosphate + H2O = (S)-alpha-terpineol + diphosphate. It catalyses the reaction (2E)-geranyl diphosphate + H2O = (R)-alpha-terpineol + diphosphate. It functions in the pathway secondary metabolite biosynthesis; terpenoid biosynthesis. Involved in the biosynthesis of phenolic monoterpenes natural products. Monoterpene synthase which catalyzes the conversion of geranyl diphosphate (GPP) to alpha-terpineol (isomer is not determined). The sequence is that of Alpha-terpineol synthase, chloroplastic from Thymus caespititius (Cretan thyme).